Here is a 282-residue protein sequence, read N- to C-terminus: Caspase-3 (282 aa).

Catalysis depends on residues histidine 131 and cysteine 174.

Belongs to the peptidase C14A family. As to quaternary structure, heterotetramer that consists of two anti-parallel arranged heterodimers, each one formed by a 17 kDa (p17) and a 12 kDa (p12) subunit.

Its subcellular location is the cytoplasm. It carries out the reaction Strict requirement for an Asp residue at positions P1 and P4. It has a preferred cleavage sequence of Asp-Xaa-Xaa-Asp-|- with a hydrophobic amino-acid residue at P2 and a hydrophilic amino-acid residue at P3, although Val or Ala are also accepted at this position.. In terms of biological role, important mediator of apoptosis. At the onset of apoptosis, it proteolytically cleaves poly(ADP-ribose) polymerase PARP1 at a '216-Asp-|-Gly-217' bond. This is Caspase-3 (casp3) from Xenopus laevis (African clawed frog).